Here is a 565-residue protein sequence, read N- to C-terminus: MEPKTKKQRSLYIPYAGPVLLEFPLLNKGSAFSMEERRNFNLLGLLPEVVETIEEQAERAWIQYQGFKTEIDKHIYLRNIQDTNETLFYRLVNNHLDEMMPVIYTPTVGAACERFSEIYRRSRGVFISYQNRHNMDDILQNVPNHNIKVIVVTDGERILGLGDQGIGGMGIPIGKLSLYTACGGISPAYTLPVVLDVGTNNQQLLNDPLYMGWRNPRITDDEYYEFVDEFIQAVKQRWPDVLLQFEDFAQKNAMPLLNRYRNEICSFNDDIQGTAAVTVGTLIAASRAAGGQLSEKKIVFLGAGSAGCGIAEMIIAQTQREGLSEEAARQKVFMVDRFGLLTDKMPNLLPFQTKLVQKRENLSDWDTDSDVLSLLDVVRNVKPDILIGVSGQTGLFTEEIIREMHKHCPRPIVMPLSNPTSRVEATPQDIIAWTEGNALVATGSPFNPVVWKDKIYPIAQCNNAFIFPGIGLGVIASGASRITDEMLMSASEMLAQYSPLVLNGEGLVLPELKDIQKVSRAIAFAVGKMAQQQGVAVKTSAEALQQAIDDNFWHAEYRDYRRTSI.

Tyr104 acts as the Proton donor in catalysis. Arg157 is a binding site for NAD(+). Catalysis depends on Lys175, which acts as the Proton acceptor. A divalent metal cation contacts are provided by Glu246, Asp247, and Asp270. NAD(+) is bound by residues Asp270 and Asn418.

The protein belongs to the malic enzymes family. In terms of assembly, homotetramer. Requires Mg(2+) as cofactor. The cofactor is Mn(2+).

It carries out the reaction (S)-malate + NAD(+) = pyruvate + CO2 + NADH. It catalyses the reaction oxaloacetate + H(+) = pyruvate + CO2. In Escherichia coli O6:H1 (strain CFT073 / ATCC 700928 / UPEC), this protein is NAD-dependent malic enzyme.